The following is a 186-amino-acid chain: Ribosome-recycling factor (186 aa).

This sequence belongs to the RRF family.

Its subcellular location is the cytoplasm. Functionally, responsible for the release of ribosomes from messenger RNA at the termination of protein biosynthesis. May increase the efficiency of translation by recycling ribosomes from one round of translation to another. This is Ribosome-recycling factor from Rickettsia bellii (strain OSU 85-389).